The sequence spans 547 residues: Chaperonin GroEL (547 aa).

ATP contacts are provided by residues 30–33 (TLGP), Lys51, 87–91 (DGTTT), Gly415, and Asp496. The disordered stretch occupies residues 527 to 547 (SDKEEPMPMRGGMGGMGGMDF). The span at 537-547 (GGMGGMGGMDF) shows a compositional bias: gly residues.

The protein belongs to the chaperonin (HSP60) family. In terms of assembly, forms a cylinder of 14 subunits composed of two heptameric rings stacked back-to-back. Interacts with the co-chaperonin GroES.

It localises to the cytoplasm. The catalysed reaction is ATP + H2O + a folded polypeptide = ADP + phosphate + an unfolded polypeptide.. In terms of biological role, together with its co-chaperonin GroES, plays an essential role in assisting protein folding. The GroEL-GroES system forms a nano-cage that allows encapsulation of the non-native substrate proteins and provides a physical environment optimized to promote and accelerate protein folding. In Rickettsia massiliae (strain Mtu5), this protein is Chaperonin GroEL.